The sequence spans 512 residues: Serine--tRNA ligase, cytoplasmic (512 aa).

M1 is subject to N-acetylmethionine. An interaction with tRNA region spans residues 9–61; sequence RVDKGGDPALIRETQEKRFKDPGLVDQLVKADSEWRRCRFRADNLNKLKNLCS. S241 bears the Phosphoserine mark. L-serine-binding residues include T271 and R302. ATP is bound by residues 302-304 and 318-321; these read RQE and VHQF. K323 is subject to N6-acetyllysine. E325 is a binding site for L-serine. 391–394 is a binding site for ATP; that stretch reads ELVS. N427 contributes to the L-serine binding site. Residues 470 to 512 form a disordered region; sequence FVKPAPIDQEPSKKQKKQHEGSKKKAKEVPLENQLQSMEVTEA. A compositionally biased stretch (basic and acidic residues) spans 479 to 499; that stretch reads EPSKKQKKQHEGSKKKAKEVP. The Nuclear localization signal motif lies at 482-494; sequence KKQKKQHEGSKKK. Positions 502–512 are enriched in polar residues; sequence NQLQSMEVTEA. S506 carries the phosphoserine modification.

Belongs to the class-II aminoacyl-tRNA synthetase family. Type-1 seryl-tRNA synthetase subfamily. Homodimer. The tRNA molecule may bind across the dimer. Interacts with SIRT2. Interacts with METTL6; interaction is required for the tRNA N(3)-methylcytidine methyltransferase activity of METTL6.

The protein resides in the cytoplasm. It is found in the nucleus. It carries out the reaction tRNA(Ser) + L-serine + ATP = L-seryl-tRNA(Ser) + AMP + diphosphate + H(+). The catalysed reaction is tRNA(Sec) + L-serine + ATP = L-seryl-tRNA(Sec) + AMP + diphosphate + H(+). Its pathway is aminoacyl-tRNA biosynthesis; selenocysteinyl-tRNA(Sec) biosynthesis; L-seryl-tRNA(Sec) from L-serine and tRNA(Sec): step 1/1. Its function is as follows. Catalyzes the attachment of serine to tRNA(Ser) in a two-step reaction: serine is first activated by ATP to form Ser-AMP and then transferred to the acceptor end of tRNA(Ser). Is probably also able to aminoacylate tRNA(Sec) with serine, to form the misacylated tRNA L-seryl-tRNA(Sec), which will be further converted into selenocysteinyl-tRNA(Sec). In the nucleus, binds to the VEGFA core promoter and prevents MYC binding and transcriptional activation by MYC. Recruits SIRT2 to the VEGFA promoter, promoting deacetylation of histone H4 at 'Lys-16' (H4K16). Thereby, inhibits the production of VEGFA and sprouting angiogenesis mediated by VEGFA. The sequence is that of Serine--tRNA ligase, cytoplasmic (Sars1) from Mus musculus (Mouse).